The primary structure comprises 885 residues: Leucine--tRNA ligase (885 aa).

The short motif at 46–56 (PYPSGALHMGH) is the 'HIGH' region element. Residues 638-642 (KMSKS) carry the 'KMSKS' region motif. Lysine 641 contributes to the ATP binding site.

This sequence belongs to the class-I aminoacyl-tRNA synthetase family.

Its subcellular location is the cytoplasm. It carries out the reaction tRNA(Leu) + L-leucine + ATP = L-leucyl-tRNA(Leu) + AMP + diphosphate. This Xanthomonas campestris pv. campestris (strain B100) protein is Leucine--tRNA ligase.